Here is a 617-residue protein sequence, read N- to C-terminus: Zinc finger protein 221 (617 aa).

The KRAB domain occupies Val-30–Ser-100. C2H2-type zinc fingers lie at residues Tyr-170–His-192, His-198–His-220, and Tyr-226–His-248. A C2H2-type 4; degenerate zinc finger spans residues Phe-254–His-276. C2H2-type zinc fingers lie at residues Tyr-282–His-304, Phe-310–His-332, Phe-338–His-360, Tyr-366–His-388, Tyr-394–His-416, Phe-422–His-444, Tyr-450–His-472, Tyr-478–His-500, Phe-506–His-528, Tyr-534–His-556, and Tyr-562–His-584.

Belongs to the krueppel C2H2-type zinc-finger protein family.

The protein resides in the nucleus. Its function is as follows. May be involved in transcriptional regulation. The polypeptide is Zinc finger protein 221 (ZNF221) (Homo sapiens (Human)).